Reading from the N-terminus, the 443-residue chain is Phenylalanine--tRNA ligase alpha subunit (443 aa).

Residues T332, 375–377, and Y415 contribute to the L-phenylalanine site; that span reads QVE. A Mg(2+)-binding site is contributed by E417. L-phenylalanine is bound at residue F441.

This sequence belongs to the class-II aminoacyl-tRNA synthetase family. Phe-tRNA synthetase alpha subunit type 2 subfamily. In terms of assembly, heterotetramer; dimer of two heterodimers formed by FARSA and FARSB. The cofactor is Mg(2+).

Its subcellular location is the cytoplasm. The catalysed reaction is tRNA(Phe) + L-phenylalanine + ATP = L-phenylalanyl-tRNA(Phe) + AMP + diphosphate + H(+). The chain is Phenylalanine--tRNA ligase alpha subunit (FARSA) from Gallus gallus (Chicken).